The chain runs to 208 residues: FMN-dependent NADH:quinone oxidoreductase (208 aa).

FMN contacts are provided by residues 17-19 (SNS), 99-102 (MWNL), and 143-146 (SRGG).

Belongs to the azoreductase type 1 family. As to quaternary structure, homodimer. It depends on FMN as a cofactor.

The enzyme catalyses 2 a quinone + NADH + H(+) = 2 a 1,4-benzosemiquinone + NAD(+). The catalysed reaction is N,N-dimethyl-1,4-phenylenediamine + anthranilate + 2 NAD(+) = 2-(4-dimethylaminophenyl)diazenylbenzoate + 2 NADH + 2 H(+). In terms of biological role, quinone reductase that provides resistance to thiol-specific stress caused by electrophilic quinones. Functionally, also exhibits azoreductase activity. Catalyzes the reductive cleavage of the azo bond in aromatic azo compounds to the corresponding amines. The chain is FMN-dependent NADH:quinone oxidoreductase from Staphylococcus aureus (strain COL).